The sequence spans 396 residues: MGEEAAGVRPELVREAEVSLLECKVCFERFGHRQQRRPRNLPCGHVVCLACVAALAHPRTLALECPFCRRACRACDTSDCLPVLHLLELLGSTLHASPAALSAASCAPGALTCYHAFGGWGTLVNPTGLALCPKTGRVVVVHDGKRRVKIFDSGGGGAHQFGEKGDAAHDVKYPLDVAVTNDCHVVVTDAGDCSLKVFDFFGQIKLVVGKQFSLPWGVEITPHNGVLVTDAEAGTLHLLEADFPEGVLRRIERLQAHLCNPRGVAVSWLTGAIAVLEHPCALGTSSGNNTRVKVFNSSMQLIGQVDSFGLNLLFPSKITASAVTFDHQGNVIVADTSGPAIVCLGKPEEFPALKPMVTHGLSRPVALVFTKENSLLVLDSASHSIKVFKVMEGNGG.

An RING-type zinc finger spans residues 23 to 69 (CKVCFERFGHRQQRRPRNLPCGHVVCLACVAALAHPRTLALECPFCR). NHL repeat units follow at residues 110 to 154 (ALTC…FDSG), 158 to 201 (AHQF…FDFF), 202 to 242 (GQIK…LEAD), 245 to 298 (EGVL…FNSS), 299 to 347 (MQLI…LGKP), and 348 to 391 (EEFP…FKVM).

Interacts with AGL. Interacts (via the NHL repeats) with EPM2A/laforin. Forms a complex with EPM2A/laforin and HSP70.

The protein localises to the endoplasmic reticulum. It localises to the nucleus. The enzyme catalyses S-ubiquitinyl-[E2 ubiquitin-conjugating enzyme]-L-cysteine + [acceptor protein]-L-lysine = [E2 ubiquitin-conjugating enzyme]-L-cysteine + N(6)-ubiquitinyl-[acceptor protein]-L-lysine.. It participates in protein modification; protein ubiquitination. In terms of biological role, E3 ubiquitin-protein ligase. Together with the phosphatase EPM2A/laforin, appears to be involved in the clearance of toxic polyglucosan and protein aggregates via multiple pathways. In complex with EPM2A/laforin and HSP70, suppresses the cellular toxicity of misfolded proteins by promoting their degradation through the ubiquitin-proteasome system (UPS). Ubiquitinates the glycogen-targeting protein phosphatase subunits PPP1R3C/PTG and PPP1R3D in a laforin-dependent manner and targets them for proteasome-dependent degradation, thus decreasing glycogen accumulation. Polyubiquitinates EPM2A/laforin and ubiquitinates AGL and targets them for proteasome-dependent degradation. Also promotes proteasome-independent protein degradation through the macroautophagy pathway. The protein is E3 ubiquitin-protein ligase NHLRC1 (Nhlrc1) of Rattus norvegicus (Rat).